The primary structure comprises 227 residues: Sperm-associated antigen 7 (227 aa).

The interval 1–45 (MADLLGSILSSMEKPPSLGDQESRRKAREQAARLKKLQEQDKQQK) is disordered. Alanine 2 bears the N-acetylalanine mark. The span at 21–45 (QESRRKAREQAARLKKLQEQDKQQK) shows a compositional bias: basic and acidic residues. The Nuclear localization signal motif lies at 35–51 (KKLQEQDKQQKVEFRKR). Residues 46–109 (VEFRKRMEKE…DCRYVMIFKK (64 aa)) enclose the R3H domain. At serine 114 the chain carries Phosphoserine. Residues 118–161 (LDSYRHGEEWDPQKAEEKRKLKELAQKQEEEAAQQGPAVVSPAS) form a disordered region. The segment covering 119–147 (DSYRHGEEWDPQKAEEKRKLKELAQKQEE) has biased composition (basic and acidic residues). The short motif at 122–139 (RHGEEWDPQKAEEKRKLK) is the Nuclear localization signal element. Phosphoserine is present on residues serine 158 and serine 202.

Its subcellular location is the nucleus. In Mus musculus (Mouse), this protein is Sperm-associated antigen 7 (Spag7).